The chain runs to 239 residues: Fatty acid metabolism regulator protein (239 aa).

The HTH gntR-type domain maps to Gln6 to Phe74. The segment at residues Glu34–Gln53 is a DNA-binding region (H-T-H motif).

In terms of assembly, homodimer.

The protein localises to the cytoplasm. Multifunctional regulator of fatty acid metabolism. The chain is Fatty acid metabolism regulator protein from Proteus mirabilis (strain HI4320).